The chain runs to 483 residues: Salicylaldehyde dehydrogenase (483 aa).

Position 228–233 (228–233 (GSTRVG)) interacts with NAD(+). Active-site residues include glutamate 250 and cysteine 284.

This sequence belongs to the aldehyde dehydrogenase family.

The catalysed reaction is salicylaldehyde + NAD(+) + H2O = salicylate + NADH + 2 H(+). Its pathway is aromatic compound metabolism; naphthalene degradation. The chain is Salicylaldehyde dehydrogenase (nahF) from Pseudomonas putida (Arthrobacter siderocapsulatus).